An 858-amino-acid polypeptide reads, in one-letter code: MAFPAPAFSLANLLNGSYGVDTPEEVERVRSEQREEAAAACRNYRPLPAVDVSESVPEDAHSLRTPDGAPSEEVSVEFVTYGAEDYLEKSDDELLVAFETMVKPMRIGQLWCPAFNKCSFISSIAMARALLLAPRTSHRTMKCFEDLVAAIYTKSDFYYDDECEADDVQIDISSRDVPGYSFEPWSRTSGFEPPPICEACDMIMYQCPCFDFNALKKSCAERTFADDYVIEGLDGVVDNATLLSNLGPFLVPVKCQYEKCPTPTVANPPSLNRATDRVDINLVQSICDSTLPTHSNYDDSFHQVFVESADYSIDLDHVRLRQSDLIAKIPDSGHMIPVLNTGSGHKRVGTTKEVLTAIKKRNADVPELGDSVNLSRLSKAVAERFFISYINGNSLASSNFVNVVSNFHDYMEKWKSSGLSYDDLPDLHAENLQFYDHMIKSDVKPVVSDTLNIDRPVPATITYHKKGITSQFSPLFTALFERFQRCLRERIILPVGKISSLEMAGFDVKNKHCLEIDLSKFDKSQGEFHLMIQEHILNGLGCPAPITKWWCDFHRFSYIRDRRAGVGMPISFQRRTGDAFTYFGNTIVTMAEFAWCYDTDQFEKLLFSGDDSLGFSVLPPVGDPSKFTTLFNMEAKVMEPAVPYICSKFLLSDEFGNTFSVPDPLREVQRLGTKKIPYSDNDEFLFAHFMSFVDRLKFLDRMTQSCIDQLSLFFELKYRKSGAEAALMLGAFKKYTANFQSYKELYYSDRRQCELINSFSCVELRIERSSSTKQRKKKDGIERRRDDKRRTPTGSYGGGEEAETKVSQAESTGTRSQKSQREGAFKSQAVPLPTILSSRWFGTDRDVPPCEHGGIVRV.

A RdRp catalytic domain is found at Lys-511–Pro-624. The tract at residues Thr-772–Val-830 is disordered. The span at Asp-779–Arg-790 shows a compositional bias: basic and acidic residues. Residues Lys-805–Gln-817 are compositionally biased toward polar residues.

This sequence belongs to the ssRNA positive-strand viruses RNA-directed RNA polymerase family. In terms of assembly, interacts with replication protein 1a.

It catalyses the reaction RNA(n) + a ribonucleoside 5'-triphosphate = RNA(n+1) + diphosphate. RNA-dependent RNA polymerase which replicates the viral genome composed of 3 RNA segments, RNA1, RNA2 and RNA3. In Cucumis sativus (Cucumber), this protein is RNA-directed RNA polymerase 2a.